Reading from the N-terminus, the 131-residue chain is UPF0102 protein YraN (131 aa).

Positions 1 to 19 (MATVPTRSGSPRQLTTKQT) are enriched in polar residues. Positions 1–21 (MATVPTRSGSPRQLTTKQTGD) are disordered.

It belongs to the UPF0102 family.

The protein is UPF0102 protein YraN of Escherichia coli O127:H6 (strain E2348/69 / EPEC).